Reading from the N-terminus, the 43-residue chain is uncharacterized protein (43 aa).

This is an uncharacterized protein from Sinorhizobium fredii (strain NBRC 101917 / NGR234).